Consider the following 150-residue polypeptide: Deoxyuridine 5'-triphosphate nucleotidohydrolase (150 aa).

Substrate is bound by residues 69 to 71, asparagine 82, 86 to 88, and lysine 96; these read RSG and LID.

It belongs to the dUTPase family. The cofactor is Mg(2+).

It carries out the reaction dUTP + H2O = dUMP + diphosphate + H(+). The protein operates within pyrimidine metabolism; dUMP biosynthesis; dUMP from dCTP (dUTP route): step 2/2. Its function is as follows. This enzyme is involved in nucleotide metabolism: it produces dUMP, the immediate precursor of thymidine nucleotides and it decreases the intracellular concentration of dUTP so that uracil cannot be incorporated into DNA. This Neisseria meningitidis serogroup B (strain ATCC BAA-335 / MC58) protein is Deoxyuridine 5'-triphosphate nucleotidohydrolase.